Consider the following 67-residue polypeptide: Protein AaeX (67 aa).

Helical transmembrane passes span 3–23 and 43–63; these read LFPVIVVFGLSFPPIFFELLL and FVWHPALFNTALYCCLFYLIS.

This sequence belongs to the AaeX family.

The protein localises to the cell membrane. In Escherichia coli (strain K12 / DH10B), this protein is Protein AaeX.